The chain runs to 393 residues: Methylthioribose kinase (393 aa).

ATP is bound by residues Asn-38, Lys-53, and 107–109 (EDL). Asp-225 provides a ligand contact to substrate. 242–244 (DPE) is a binding site for ATP. Arg-332 is a substrate binding site.

The protein belongs to the methylthioribose kinase family. Homodimer.

The enzyme catalyses 5-(methylsulfanyl)-D-ribose + ATP = 5-(methylsulfanyl)-alpha-D-ribose 1-phosphate + ADP + H(+). It functions in the pathway amino-acid biosynthesis; L-methionine biosynthesis via salvage pathway; S-methyl-5-thio-alpha-D-ribose 1-phosphate from S-methyl-5'-thioadenosine (hydrolase route): step 2/2. Catalyzes the phosphorylation of methylthioribose into methylthioribose-1-phosphate. The polypeptide is Methylthioribose kinase (Bacillus cereus (strain AH187)).